The sequence spans 177 residues: Large ribosomal subunit protein bL9 (177 aa).

The segment at 151–177 is disordered; sequence EDEEIAEAAPVAEAQAEADGHSTEETA. Over residues 157-167 the composition is skewed to low complexity; sequence EAAPVAEAQAE. The span at 168–177 shows a compositional bias: basic and acidic residues; sequence ADGHSTEETA.

Belongs to the bacterial ribosomal protein bL9 family.

Functionally, binds to the 23S rRNA. The chain is Large ribosomal subunit protein bL9 from Solidesulfovibrio magneticus (strain ATCC 700980 / DSM 13731 / RS-1) (Desulfovibrio magneticus).